The sequence spans 316 residues: F-box protein At4g09920 (316 aa).

The region spanning 1–47 is the F-box domain; sequence MDRIIGLPDEVLVKILSFVPTKVAVSTSILSKRWEFLWMWLTKLKFG.

The chain is F-box protein At4g09920 from Arabidopsis thaliana (Mouse-ear cress).